Consider the following 416-residue polypeptide: Major royal jelly protein 8 (416 aa).

An N-terminal signal peptide occupies residues 1-16 (MIRWLLLMYLGITCQG). Residues Asn-24, Asn-58, Asn-93, Asn-115, Asn-158, Asn-175, Asn-196, and Asn-215 are each glycosylated (N-linked (GlcNAc...) asparagine).

Belongs to the major royal jelly protein family. In terms of tissue distribution, expressed at very low levels in the hypopharyngeal glands of worker honey bees (at protein level). Secreted into bee venom in the sting apparatus (at protein level). Expressed in the spermatheca of adult queen bees (at protein level); expression levels are higher in mated queens than in virgin queens. Along with Mrjp9 expressed at very low levels in the head of worker bees compared to other major royal jelly proteins.

It localises to the secreted. In terms of biological role, component of bee sting venom. Component of royal jelly, a substance produced in the hypopharyngeal gland containing proteins, free amino acids, fatty acids, sugars and other nutrients, which is fed to developing larvae by worker nurse bees; may be present only at trace levels. All larvae are fed some royal jelly (also known as worker jelly) early in their development but it forms the principal source of nutrition for larvae destined to become queen bees. Produced in the spermatheca of adult queen bees, along with other major royal jelly proteins, where it may act as a nutrient supply for sperm stored by mated queens, or be involved in energy metabolism. The protein is Major royal jelly protein 8 of Apis mellifera (Honeybee).